The primary structure comprises 269 residues: Protein tsct-1 (269 aa).

It belongs to the TSC-22/Dip/Bun family.

The protein is Protein tsct-1 of Caenorhabditis elegans.